The primary structure comprises 2083 residues: Non-reducing polyketide synthase curS2 (2083 aa).

The interval 9 to 246 is N-terminal acylcarrier protein transacylase domain (SAT); the sequence is LLFGDVTDPW…NELDIHALQH (238 aa). The 433-residue stretch at 366-798 folds into the Ketosynthase family 3 (KS3) domain; it reads RDGIAIVGMA…GGNACLLLED (433 aa). Active-site for beta-ketoacyl synthase activity residues include cysteine 543, histidine 678, and histidine 717. Residues 895–1201 form a malonyl-CoA:ACP transacylase (MAT) domain region; it reads VFVFTGQGSH…THTLQPNTHN (307 aa). The active-site For acyl/malonyl transferase activity is the serine 986. The interval 1276 to 1415 is N-terminal hotdog fold; sequence AQYLVSKSSS…DPAKTQADWD (140 aa). The PKS/mFAS DH domain occupies 1276-1585; it reads AQYLVSKSSS…YQELPRVTWK (310 aa). A product template (PT) domain region spans residues 1285–1581; it reads SPKVQVVFRA…IDLRYQELPR (297 aa). The interval 1437–1585 is C-terminal hotdog fold; it reads GHRMQPEVFY…YQELPRVTWK (149 aa). Residues 1637–1714 form the Carrier domain; it reads DFDEGLVDAI…DLRRAFGANK (78 aa). An O-(pantetheine 4'-phosphoryl)serine modification is found at serine 1674. A disordered region spans residues 1710–1790; it reads FGANKPKTSK…KMDETDTSPA (81 aa). Positions 1718-1736 are enriched in low complexity; that stretch reads SKPQPGSTTPSSSQSSIPS. Over residues 1745-1754 the composition is skewed to polar residues; the sequence is MSDTASSLGS. Residues 1771 to 1784 show a composition bias toward basic and acidic residues; that stretch reads LEPKPNHHLGKMDE. The tract at residues 1811–2058 is thioesterase (TE) domain; the sequence is MMADGTGTIA…LSVAGDHLDL (248 aa). Histidine 2065 (for thioesterase activity) is an active-site residue.

It participates in mycotoxin biosynthesis. Functionally, non-reducing polyketide synthase; part of the gene cluster that mediates the biosynthesis of 10,11-dehydrocurvularin, a prevalent fungal phytotoxin with heat shock response and immune-modulatory activities. The highly reducing polyketide synthase curS1 is responsible for biosynthesis up to the tetraketide stage. The non-reducing polyketide synthase curS2 then conducts four additional chain extension cycles, producing the unreduced part of the nascent octaketide from C-1 to C-8 in 10,11-dehydrocurvularin. The sequence is that of Non-reducing polyketide synthase curS2 from Aspergillus terreus.